Here is a 462-residue protein sequence, read N- to C-terminus: Cysteine--tRNA ligase (462 aa).

Cysteine 28 provides a ligand contact to Zn(2+). Positions 30–40 (VTAYDLCHIGH) match the 'HIGH' region motif. Zn(2+) contacts are provided by cysteine 209, histidine 234, and glutamate 238. A 'KMSKS' region motif is present at residues 266-270 (KMSKS). ATP is bound at residue lysine 269.

The protein belongs to the class-I aminoacyl-tRNA synthetase family. In terms of assembly, monomer. Requires Zn(2+) as cofactor.

Its subcellular location is the cytoplasm. The catalysed reaction is tRNA(Cys) + L-cysteine + ATP = L-cysteinyl-tRNA(Cys) + AMP + diphosphate. This chain is Cysteine--tRNA ligase, found in Baumannia cicadellinicola subsp. Homalodisca coagulata.